A 425-amino-acid polypeptide reads, in one-letter code: Glutamate-1-semialdehyde 2,1-aminomutase (425 aa).

N6-(pyridoxal phosphate)lysine is present on lysine 265.

It belongs to the class-III pyridoxal-phosphate-dependent aminotransferase family. HemL subfamily. Homodimer. Requires pyridoxal 5'-phosphate as cofactor.

It localises to the cytoplasm. It carries out the reaction (S)-4-amino-5-oxopentanoate = 5-aminolevulinate. It participates in porphyrin-containing compound metabolism; protoporphyrin-IX biosynthesis; 5-aminolevulinate from L-glutamyl-tRNA(Glu): step 2/2. The sequence is that of Glutamate-1-semialdehyde 2,1-aminomutase from Nitrosospira multiformis (strain ATCC 25196 / NCIMB 11849 / C 71).